A 458-amino-acid chain; its full sequence is Adenylosuccinate synthetase (458 aa).

GTP is bound by residues 11–17 (GDEGKGG) and 39–41 (GHT). The active-site Proton acceptor is Asp12. Positions 12 and 39 each coordinate Mg(2+). Residues 12–15 (DEGK), 37–40 (NAGH), Thr127, Arg141, Gln232, Thr247, and Arg330 contribute to the IMP site. His40 functions as the Proton donor in the catalytic mechanism. A substrate-binding site is contributed by 326-332 (TVTGRPR). Residues Arg332, 358–360 (HLD), and 443–445 (GVG) contribute to the GTP site.

This sequence belongs to the adenylosuccinate synthetase family. Homodimer. Requires Mg(2+) as cofactor.

It is found in the cytoplasm. It catalyses the reaction IMP + L-aspartate + GTP = N(6)-(1,2-dicarboxyethyl)-AMP + GDP + phosphate + 2 H(+). It functions in the pathway purine metabolism; AMP biosynthesis via de novo pathway; AMP from IMP: step 1/2. Plays an important role in the de novo pathway of purine nucleotide biosynthesis. Catalyzes the first committed step in the biosynthesis of AMP from IMP. This chain is Adenylosuccinate synthetase, found in Haloarcula marismortui (strain ATCC 43049 / DSM 3752 / JCM 8966 / VKM B-1809) (Halobacterium marismortui).